The sequence spans 528 residues: MSVAGAPESTFDTVLVVDFGAQYAQLIARRVRECHVYSEIVPPTMPVEEMLAKKPKAIILSGGPSSVYADGAPQAPPGLFDTGVPILGICYGFQVMAQTLGGTVERTGRSEYGRTTINVATDSLLFHSLPQQQTVWMSHGDAVSQVPDGFTVTGQTADAPVAAMEHRDRALYGVQFHPEVVHTEHGRAVLQHFLYEAAGCRPTWTMVNIVEDQVARIRAQIGSKRAICGLSGGVDSAVAAALVQRAIGDRLTCVFVDHGLLRQGEAEQVEKDFVAATGASLKVVDAQERFLTALAGVTDPETKRKIIGREFIRVFEQAAREIVAEAGEGDEAVEFLVQGTLYPDVVESGGGNGTANIKSHHNVGGLPDDLQFTLVEPLRELFKDEVRRVGEELGLPAEMVWRHPFPGPGLAIRIVGEVTAERLEILRAADAIVREELTRAGLDRAIWQCPVVLLADVRSVGVQGDGRTYGHPIVLRPVTSEDAMTADWARVPYDVLATISNRITNEVPDINRVTLDITSKPPGTIEWE.

The Glutamine amidotransferase type-1 domain occupies 13 to 203; the sequence is TVLVVDFGAQ…LYEAAGCRPT (191 aa). Cysteine 90 serves as the catalytic Nucleophile. Active-site residues include histidine 177 and glutamate 179. The 199-residue stretch at 204–402 folds into the GMPS ATP-PPase domain; sequence WTMVNIVEDQ…LGLPAEMVWR (199 aa). 231 to 237 serves as a coordination point for ATP; sequence SGGVDSA.

As to quaternary structure, homodimer.

The catalysed reaction is XMP + L-glutamine + ATP + H2O = GMP + L-glutamate + AMP + diphosphate + 2 H(+). Its pathway is purine metabolism; GMP biosynthesis; GMP from XMP (L-Gln route): step 1/1. Its function is as follows. Catalyzes the synthesis of GMP from XMP. The chain is GMP synthase [glutamine-hydrolyzing] from Thermobifida fusca (strain YX).